A 185-amino-acid polypeptide reads, in one-letter code: GTP cyclohydrolase 1 (185 aa).

Zn(2+)-binding residues include Cys-75, His-78, and Cys-146.

The protein belongs to the GTP cyclohydrolase I family. Toroid-shaped homodecamer, composed of two pentamers of five dimers.

It catalyses the reaction GTP + H2O = 7,8-dihydroneopterin 3'-triphosphate + formate + H(+). The protein operates within cofactor biosynthesis; 7,8-dihydroneopterin triphosphate biosynthesis; 7,8-dihydroneopterin triphosphate from GTP: step 1/1. This Alkalilimnicola ehrlichii (strain ATCC BAA-1101 / DSM 17681 / MLHE-1) protein is GTP cyclohydrolase 1.